A 153-amino-acid polypeptide reads, in one-letter code: Small ribosomal subunit protein bS6 (153 aa).

A disordered region spans residues 94-153 (EAHEEGPSAMMQKRDRDDRPRRDGDRPDRGDRGDRGDRGPREGGRESFGDRPRRPREDRA).

Belongs to the bacterial ribosomal protein bS6 family.

Its function is as follows. Binds together with bS18 to 16S ribosomal RNA. The protein is Small ribosomal subunit protein bS6 of Allorhizobium ampelinum (strain ATCC BAA-846 / DSM 112012 / S4) (Agrobacterium vitis (strain S4)).